We begin with the raw amino-acid sequence, 453 residues long: Probable acetylornithine aminotransferase, mitochondrial (453 aa).

The residue at position 302 (Lys302) is an N6-(pyridoxal phosphate)lysine.

This sequence belongs to the class-III pyridoxal-phosphate-dependent aminotransferase family. Pyridoxal 5'-phosphate is required as a cofactor.

The protein localises to the mitochondrion matrix. The enzyme catalyses N(2)-acetyl-L-ornithine + 2-oxoglutarate = N-acetyl-L-glutamate 5-semialdehyde + L-glutamate. It functions in the pathway amino-acid biosynthesis; L-arginine biosynthesis; N(2)-acetyl-L-ornithine from L-glutamate: step 4/4. The chain is Probable acetylornithine aminotransferase, mitochondrial (argD) from Dictyostelium discoideum (Social amoeba).